A 189-amino-acid chain; its full sequence is Stathmin-4 (189 aa).

Residues Cys-20 and Cys-22 are each lipidated (S-palmitoyl cysteine). The SLD domain occupies 48-189 (SDMEVIELNK…NKELKEEASR (142 aa)). Residues Glu-54 and Ser-90 each carry the phosphoserine modification. Residues 90-189 (SLEEIQKKLE…NKELKEEASR (100 aa)) are a coiled coil. Residues 168-189 (QEKDKHAEEVRKNKELKEEASR) form a disordered region.

Belongs to the stathmin family. In terms of tissue distribution, nervous tissue.

It localises to the golgi apparatus. It is found in the cell projection. The protein localises to the growth cone. Its subcellular location is the axon. Its function is as follows. Exhibits microtubule-destabilizing activity. This is Stathmin-4 (Stmn4) from Rattus norvegicus (Rat).